We begin with the raw amino-acid sequence, 320 residues long: 1-aminocyclopropane-1-carboxylate oxidase 3 (320 aa).

A Fe2OG dioxygenase domain is found at 153–253; sequence PNFGTKVSNY…RMSLASFYNP (101 aa). 3 residues coordinate Fe cation: His177, Asp179, and His234.

This sequence belongs to the iron/ascorbate-dependent oxidoreductase family. Fe cation is required as a cofactor.

The enzyme catalyses 1-aminocyclopropane-1-carboxylate + L-ascorbate + O2 = ethene + L-dehydroascorbate + hydrogen cyanide + CO2 + 2 H2O. Its pathway is alkene biosynthesis; ethylene biosynthesis via S-adenosyl-L-methionine; ethylene from S-adenosyl-L-methionine: step 2/2. The polypeptide is 1-aminocyclopropane-1-carboxylate oxidase 3 (ACO3) (Petunia hybrida (Petunia)).